The following is a 300-amino-acid chain: Protein CANDIDATE G-PROTEIN COUPLED RECEPTOR 2 (300 aa).

7 helical membrane-spanning segments follow: residues 37 to 57 (GFLH…YLAY), 73 to 93 (IMIA…AWCC), 110 to 130 (LTLF…AFLF), 152 to 172 (IGLD…PLFI), 183 to 203 (WGLW…IFFM), 222 to 242 (ITVM…TANG), and 245 to 265 (FGLW…LPLL).

This sequence belongs to the UPF0359 family. As to quaternary structure, interacts with GPA1. As to expression, expressed at low levels in seedlings.

Its subcellular location is the cell membrane. Plays a role in plants and microbes interactions. G-protein coupled melatonin receptor involved in root growth mediated by the bacterial quorum-sensing signals N-acyl-homoserine lactones (AHLs). Binds to melatonin. Phytomelatonin receptor required, in collaboration with GPA1, for melatonin-mediated stomatal closure involving H(2)O(2) and Ca(2+) signals. Essential for melatonin-mediated plant response to osmotic stress probably by activating reactive oxygen species (ROS) scavenging ability. This Arabidopsis thaliana (Mouse-ear cress) protein is Protein CANDIDATE G-PROTEIN COUPLED RECEPTOR 2.